Here is a 219-residue protein sequence, read N- to C-terminus: tRNA (guanine-N(7)-)-methyltransferase (219 aa).

Residues E46, E71, N100, and D122 each contribute to the S-adenosyl-L-methionine site. The active site involves D122. Substrate contacts are provided by residues K126, D158, and 199 to 202 (TEYE).

Belongs to the class I-like SAM-binding methyltransferase superfamily. TrmB family.

The catalysed reaction is guanosine(46) in tRNA + S-adenosyl-L-methionine = N(7)-methylguanosine(46) in tRNA + S-adenosyl-L-homocysteine. It functions in the pathway tRNA modification; N(7)-methylguanine-tRNA biosynthesis. Functionally, catalyzes the formation of N(7)-methylguanine at position 46 (m7G46) in tRNA. This chain is tRNA (guanine-N(7)-)-methyltransferase, found in Leuconostoc mesenteroides subsp. mesenteroides (strain ATCC 8293 / DSM 20343 / BCRC 11652 / CCM 1803 / JCM 6124 / NCDO 523 / NBRC 100496 / NCIMB 8023 / NCTC 12954 / NRRL B-1118 / 37Y).